We begin with the raw amino-acid sequence, 59 residues long: Sec-independent protein translocase protein TatA (59 aa).

A helical transmembrane segment spans residues 1-21; it reads MFSNIGFPGLILILVAVLILF.

The protein belongs to the TatA/E family. Forms a complex with TatC.

It is found in the cell membrane. Functionally, part of the twin-arginine translocation (Tat) system that transports large folded proteins containing a characteristic twin-arginine motif in their signal peptide across membranes. TatA could form the protein-conducting channel of the Tat system. This chain is Sec-independent protein translocase protein TatA, found in Bacillus mycoides (strain KBAB4) (Bacillus weihenstephanensis).